Consider the following 208-residue polypeptide: Small ribosomal subunit protein uS2 (208 aa).

This sequence belongs to the universal ribosomal protein uS2 family.

The polypeptide is Small ribosomal subunit protein uS2 (Cenarchaeum symbiosum (strain A)).